A 901-amino-acid polypeptide reads, in one-letter code: Alanine--tRNA ligase (901 aa).

4 residues coordinate Zn(2+): H600, H604, C704, and H708.

This sequence belongs to the class-II aminoacyl-tRNA synthetase family. Zn(2+) serves as cofactor.

It is found in the cytoplasm. It carries out the reaction tRNA(Ala) + L-alanine + ATP = L-alanyl-tRNA(Ala) + AMP + diphosphate. Its function is as follows. Catalyzes the attachment of alanine to tRNA(Ala) in a two-step reaction: alanine is first activated by ATP to form Ala-AMP and then transferred to the acceptor end of tRNA(Ala). Also edits incorrectly charged Ser-tRNA(Ala) and Gly-tRNA(Ala) via its editing domain. The protein is Alanine--tRNA ligase of Ignicoccus hospitalis (strain KIN4/I / DSM 18386 / JCM 14125).